The following is a 105-amino-acid chain: Replication initiation control protein YabA (105 aa).

Residues His-79, Cys-81, Cys-95, and Cys-98 each contribute to the Zn(2+) site.

This sequence belongs to the YabA family. As to quaternary structure, homotetramer. Interacts with both DnaA and DnaN, acting as a bridge between these two proteins. It depends on Zn(2+) as a cofactor.

It is found in the cytoplasm. Its subcellular location is the nucleoid. Functionally, involved in control of chromosome replication initiation. Inhibits the cooperative binding of DnaA to the oriC region, thus negatively regulating initiation of chromosome replication. Inhibits the ability of DnaA-ATP to form a helix on DNA; does not disassemble preformed DnaA-DNA helices. Decreases the residence time of DnaA on the chromosome at its binding sites (oriC, replication forks and promoter-binding sites). Tethers DnaA to the replication machinery via the DNA polymerase beta sliding clamp subunit (dnaN). Associates with oriC and other DnaA targets on the chromosome in a DnaA-dependent manner. This Streptococcus pneumoniae serotype 2 (strain D39 / NCTC 7466) protein is Replication initiation control protein YabA.